The following is a 48-amino-acid chain: Ambineela (48 aa).

In terms of assembly, monomer. In terms of processing, the blue color is due to an unidentified non-fluorescent cofactor, covalently bound to it.

Ambineela is a blue protein and has a pI of 8.7. This Acidianus ambivalens (Desulfurolobus ambivalens) protein is Ambineela.